Consider the following 111-residue polypeptide: Cell division protein FtsL (111 aa).

Topologically, residues 1-26 (MAQARTEFSKVAAPRKLEEMYAQRGD) are cytoplasmic. Residues 27-47 (LFPYLLAVLVLLTLVSVFHVW) traverse the membrane as a helical segment. The Periplasmic portion of the chain corresponds to 48–111 (SRVRVVDLNL…PTDQQVVVVK (64 aa)). Positions 51-85 (RVVDLNLEVAEVARQLKVAQEEQNRLKLEVASLKT) form a coiled coil.

It belongs to the FtsL family.

The protein resides in the cell inner membrane. In terms of biological role, essential cell division protein. The sequence is that of Cell division protein FtsL from Geobacter sulfurreducens (strain ATCC 51573 / DSM 12127 / PCA).